The chain runs to 2563 residues: Highly reducing polyketide synthase 2 (2563 aa).

The 441-residue stretch at 11–451 (MSDIAIVGYS…GSNSHIVLDD (441 aa)) folds into the Ketosynthase family 3 (KS3) domain. Catalysis depends on for beta-ketoacyl synthase activity residues Cys-182, His-317, and His-357. The Malonyl-CoA:ACP transacylase (MAT) domain maps to 589-890 (FAFTGQGAQY…DTLSEMSSAS (302 aa)). Positions 970-1101 (GELLGVRVSD…ANISVEFQDN (132 aa)) are N-terminal hotdog fold. The region spanning 970–1269 (GELLGVRVSD…TSAVSGGITH (300 aa)) is the PKS/mFAS DH domain. The active-site Proton acceptor; for dehydratase activity is His-1002. A C-terminal hotdog fold region spans residues 1126-1269 (TLPIDPRVFY…TSAVSGGITH (144 aa)). Asp-1186 serves as the catalytic Proton donor; for dehydratase activity. The methyltransferase (CMet) domain stretch occupies residues 1296-1618 (FAANAVPKDD…FSGNDLVIRD (323 aa)). One can recognise an Enoyl reductase (ER) domain in the interval 1858 to 2168 (GSLDSLQFVE…QEDTSERVIV (311 aa)). Residues 2192–2370 (STYLVAGGSG…ALSLDIGWMS (179 aa)) form the Ketoreductase (KR) domain. Residues 2480-2561 (SDARERQQVV…GVAEVVEARS (82 aa)) form the Carrier domain. At Ser-2521 the chain carries O-(pantetheine 4'-phosphoryl)serine.

It depends on pantetheine 4'-phosphate as a cofactor.

It functions in the pathway secondary metabolite biosynthesis. Its function is as follows. Highly reducing polyketide synthase; part of the gene cluster that mediates the biosynthesis of the tetraketides fugralins such as linear fugralin A and cyclic fugralin B, volatile compounds that play a role in the asexual reproductive cycle but are not involved in pathogenicity. One of the key features of fugralins is the presence of a double methyl group, which is only rarely encountered in fungal secondary metabolites. As the fugralins cluster does not contain an independent methyltransferase, the PKS FGR1 is probably responsible for adding two methyl groups to the same carbon atom. Fugralin B is similar to fugralin A except for a cyclization between the carboxylic acid C-8 and the alcohol on C-4 resulting in a six membered lactone ring, probably catalyzed by the cyclase FGR4. The exact role of the individual cluster genes remains unknown and further work is needed to unravel the biosynthetic pathway. The polypeptide is Highly reducing polyketide synthase 2 (Gibberella zeae (strain ATCC MYA-4620 / CBS 123657 / FGSC 9075 / NRRL 31084 / PH-1) (Wheat head blight fungus)).